Here is a 189-residue protein sequence, read N- to C-terminus: Pyridoxal 5'-phosphate synthase subunit PdxT (189 aa).

46 to 48 (GES) is an L-glutamine binding site. Cys-78 acts as the Nucleophile in catalysis. L-glutamine is bound by residues Arg-107 and 136-137 (IR). Catalysis depends on charge relay system residues His-173 and Glu-175.

This sequence belongs to the glutaminase PdxT/SNO family. As to quaternary structure, in the presence of PdxS, forms a dodecamer of heterodimers. Only shows activity in the heterodimer.

The catalysed reaction is aldehydo-D-ribose 5-phosphate + D-glyceraldehyde 3-phosphate + L-glutamine = pyridoxal 5'-phosphate + L-glutamate + phosphate + 3 H2O + H(+). It catalyses the reaction L-glutamine + H2O = L-glutamate + NH4(+). The protein operates within cofactor biosynthesis; pyridoxal 5'-phosphate biosynthesis. Functionally, catalyzes the hydrolysis of glutamine to glutamate and ammonia as part of the biosynthesis of pyridoxal 5'-phosphate. The resulting ammonia molecule is channeled to the active site of PdxS. In Roseiflexus castenholzii (strain DSM 13941 / HLO8), this protein is Pyridoxal 5'-phosphate synthase subunit PdxT.